The chain runs to 1105 residues: Carbamoyl phosphate synthase large chain (1105 aa).

The segment at 1–402 (MPKRDDIEKV…ALGKAVRSLE (402 aa)) is carboxyphosphate synthetic domain. ATP contacts are provided by Arg-129, Arg-169, Gly-175, Gly-176, Lys-208, Val-210, Glu-215, Gly-241, Ile-242, His-243, Gln-285, and Glu-299. The ATP-grasp 1 domain maps to 133 to 328 (KTAMKNCGLE…IAKISALLAV (196 aa)). Mg(2+) contacts are provided by Gln-285, Glu-299, and Asn-301. Positions 285, 299, and 301 each coordinate Mn(2+). Residues 403–542 (LDIAPKLDLR…STYNGMENET (140 aa)) form an oligomerization domain region. The tract at residues 543–945 (IPSKRRKIMV…AFAKAQLSAD (403 aa)) is carbamoyl phosphate synthetic domain. Positions 667-858 (AKFLKQSGLS…VAKIAAKTII (192 aa)) constitute an ATP-grasp 2 domain. Arg-703, Lys-742, Leu-744, Glu-749, Gly-774, Ile-775, His-776, Ser-777, Gln-817, and Glu-829 together coordinate ATP. Mg(2+) is bound by residues Gln-817, Glu-829, and Asn-831. Mn(2+) contacts are provided by Gln-817, Glu-829, and Asn-831. Residues 940–1101 (AQLSADGIST…QDIFYAQQNT (162 aa)) form the MGS-like domain. The tract at residues 946-1105 (GISTKSLLVT…YAQQNTLLKK (160 aa)) is allosteric domain.

It belongs to the CarB family. In terms of assembly, composed of two chains; the small (or glutamine) chain promotes the hydrolysis of glutamine to ammonia, which is used by the large (or ammonia) chain to synthesize carbamoyl phosphate. Tetramer of heterodimers (alpha,beta)4. Requires Mg(2+) as cofactor. Mn(2+) serves as cofactor.

It catalyses the reaction hydrogencarbonate + L-glutamine + 2 ATP + H2O = carbamoyl phosphate + L-glutamate + 2 ADP + phosphate + 2 H(+). The catalysed reaction is hydrogencarbonate + NH4(+) + 2 ATP = carbamoyl phosphate + 2 ADP + phosphate + 2 H(+). It participates in amino-acid biosynthesis; L-arginine biosynthesis; carbamoyl phosphate from bicarbonate: step 1/1. The protein operates within pyrimidine metabolism; UMP biosynthesis via de novo pathway; (S)-dihydroorotate from bicarbonate: step 1/3. Functionally, large subunit of the glutamine-dependent carbamoyl phosphate synthetase (CPSase). CPSase catalyzes the formation of carbamoyl phosphate from the ammonia moiety of glutamine, carbonate, and phosphate donated by ATP, constituting the first step of 2 biosynthetic pathways, one leading to arginine and/or urea and the other to pyrimidine nucleotides. The large subunit (synthetase) binds the substrates ammonia (free or transferred from glutamine from the small subunit), hydrogencarbonate and ATP and carries out an ATP-coupled ligase reaction, activating hydrogencarbonate by forming carboxy phosphate which reacts with ammonia to form carbamoyl phosphate. This Pseudothermotoga lettingae (strain ATCC BAA-301 / DSM 14385 / NBRC 107922 / TMO) (Thermotoga lettingae) protein is Carbamoyl phosphate synthase large chain.